We begin with the raw amino-acid sequence, 74 residues long: Large ribosomal subunit protein bL31 (74 aa).

Positions 16, 18, 38, and 41 each coordinate Zn(2+).

The protein belongs to the bacterial ribosomal protein bL31 family. Type A subfamily. In terms of assembly, part of the 50S ribosomal subunit. Requires Zn(2+) as cofactor.

Binds the 23S rRNA. This is Large ribosomal subunit protein bL31 from Salinispora arenicola (strain CNS-205).